The following is a 748-amino-acid chain: MAVKKFRSFDDFVPTISDSEEDVPDLDASDDEMEKKPVKSSKTKNKSKKKAKQQQGSHLDEDVHEDLNPEFQFSIDSGEVTTNFAGWDFQGDEKSDEVEKKDVDLDGIIRRKGGLIMMAATGSDAEESLSEESEEEPEEGDEPGESDDEDELALDGFGMGVKRKATEENEEDEEDEEEEDDDEDDDKKTEMSQADLGKGKDEDEDIEEDTKEEMAEFYAPEEESADAKKIVHKTFNSLSLSRPVLKGLGSLGYTSPSPIQSAAIPIALLGKDIIAGAVTGSGKTAAFMIPIIERLLYKPAHIASTRVVVLTPTRELAIQVADVGKNIGKFVNGLTFGLAVGGLNLRQQEQALKTRPDIVIATPGRFIDHLRNSASFSVDSVEILVIDEADRMLEEGFQEELQEIMSLIPSKRQTLLFSATMNSKIKQLISLSLKKPVRIMIDPPKQAADKLTQEFIRIRKRDHLKPALLYQLIRKLDNTSQKRIVVFVARKETAHKLRIVLGLLGMQVGELHGSLTQEQRLQSVNNFKSLQVPVLICTDLASRGLDIPKIEVVINFDMPKTYEIYLHRVGRTARAGREGRSVTFVGESSQDRSIVRSAIRSVEENAESGKALSRNVDWTQVEQVNSLIGAKGDVVEEIIEEEKQEKEILRAEMELRKGENMLKHKEEISARPRRTWFQSEAEKKNSKMLQVLAKNKKPINSKKRKQQEALAENPRLYKKTQKDRVEYQERQYSKKQAAYGKKGKKGKK.

2 disordered regions span residues 1-72 and 111-211; these read MAVK…PEFQ and RKGG…EDTK. Residues 18 to 32 show a composition bias toward acidic residues; sequence DSEEDVPDLDASDDE. A compositionally biased stretch (basic residues) spans 38-52; it reads VKSSKTKNKSKKKAK. Basic and acidic residues predominate over residues 58 to 67; the sequence is HLDEDVHEDL. Acidic residues-rich tracts occupy residues 124-153, 168-185, and 202-211; these read DAEE…DELA, ENEE…DEDD, and EDEDIEEDTK. Residues 233–261 carry the Q motif motif; that stretch reads KTFNSLSLSRPVLKGLGSLGYTSPSPIQS. Positions 264 to 439 constitute a Helicase ATP-binding domain; the sequence is IPIALLGKDI…SLSLKKPVRI (176 aa). Residue 277–284 coordinates ATP; sequence AVTGSGKT. The DEAD box signature appears at 387-390; it reads DEAD. The Helicase C-terminal domain maps to 468–628; it reads LLYQLIRKLD…TQVEQVNSLI (161 aa). Residues 632-667 adopt a coiled-coil conformation; it reads GDVVEEIIEEEKQEKEILRAEMELRKGENMLKHKEE. The disordered stretch occupies residues 687-748; that stretch reads KMLQVLAKNK…YGKKGKKGKK (62 aa). The span at 694 to 705 shows a compositional bias: basic residues; it reads KNKKPINSKKRK. A compositionally biased stretch (basic and acidic residues) spans 720 to 732; the sequence is TQKDRVEYQERQY.

This sequence belongs to the DEAD box helicase family. DDX27/DRS1 subfamily. In terms of assembly, associates with pre-ribosomal particles.

It localises to the nucleus. The protein resides in the nucleolus. The catalysed reaction is ATP + H2O = ADP + phosphate + H(+). ATP-binding RNA helicase involved in ribosome assembly. This chain is ATP-dependent RNA helicase DRS1 (DRS1), found in Kluyveromyces lactis (strain ATCC 8585 / CBS 2359 / DSM 70799 / NBRC 1267 / NRRL Y-1140 / WM37) (Yeast).